A 269-amino-acid polypeptide reads, in one-letter code: Phosphonoacetaldehyde hydrolase (269 aa).

D10 serves as the catalytic Nucleophile. Residues D10 and A12 each contribute to the Mg(2+) site. K52 functions as the Schiff-base intermediate with substrate in the catalytic mechanism. Position 186 (D186) interacts with Mg(2+).

It belongs to the HAD-like hydrolase superfamily. PhnX family. Homodimer. It depends on Mg(2+) as a cofactor.

The enzyme catalyses phosphonoacetaldehyde + H2O = acetaldehyde + phosphate + H(+). Its function is as follows. Involved in phosphonate degradation. The polypeptide is Phosphonoacetaldehyde hydrolase (phnX) (Salmonella typhimurium (strain LT2 / SGSC1412 / ATCC 700720)).